The primary structure comprises 347 residues: Dihydroorotate dehydrogenase (quinone) (347 aa).

FMN contacts are provided by residues 65 to 69 (AGLDK) and Thr89. Residue Lys69 participates in substrate binding. Position 114–118 (114–118 (NRMGF)) interacts with substrate. Asn146 and Asn179 together coordinate FMN. Asn179 serves as a coordination point for substrate. Ser182 serves as the catalytic Nucleophile. Asn184 lines the substrate pocket. The FMN site is built by Lys224 and Thr252. 253-254 (NT) contacts substrate. FMN is bound by residues Gly275, Gly304, and 325–326 (YT).

The protein belongs to the dihydroorotate dehydrogenase family. Type 2 subfamily. In terms of assembly, monomer. Requires FMN as cofactor.

The protein resides in the cell membrane. The enzyme catalyses (S)-dihydroorotate + a quinone = orotate + a quinol. It functions in the pathway pyrimidine metabolism; UMP biosynthesis via de novo pathway; orotate from (S)-dihydroorotate (quinone route): step 1/1. In terms of biological role, catalyzes the conversion of dihydroorotate to orotate with quinone as electron acceptor. In Herminiimonas arsenicoxydans, this protein is Dihydroorotate dehydrogenase (quinone).